Consider the following 954-residue polypeptide: Valine--tRNA ligase (954 aa).

Residues 48–58 (PNVTGSLHMGH) carry the 'HIGH' region motif. Positions 560–564 (KMSKS) match the 'KMSKS' region motif. Lys-563 is an ATP binding site. The stretch at 886 to 954 (INKDTELARL…RAQYLSIENL (69 aa)) forms a coiled coil.

Belongs to the class-I aminoacyl-tRNA synthetase family. ValS type 1 subfamily. Monomer.

The protein resides in the cytoplasm. The enzyme catalyses tRNA(Val) + L-valine + ATP = L-valyl-tRNA(Val) + AMP + diphosphate. Catalyzes the attachment of valine to tRNA(Val). As ValRS can inadvertently accommodate and process structurally similar amino acids such as threonine, to avoid such errors, it has a 'posttransfer' editing activity that hydrolyzes mischarged Thr-tRNA(Val) in a tRNA-dependent manner. The sequence is that of Valine--tRNA ligase from Mannheimia succiniciproducens (strain KCTC 0769BP / MBEL55E).